Consider the following 855-residue polypeptide: DNA mismatch repair protein MutS (855 aa).

613–620 provides a ligand contact to ATP; sequence GPNMGGKS. The interval 796-816 is disordered; it reads TTSLPHEMPSQQSGKPASPMQ.

This sequence belongs to the DNA mismatch repair MutS family.

In terms of biological role, this protein is involved in the repair of mismatches in DNA. It is possible that it carries out the mismatch recognition step. This protein has a weak ATPase activity. The sequence is that of DNA mismatch repair protein MutS from Pseudomonas aeruginosa (strain ATCC 15692 / DSM 22644 / CIP 104116 / JCM 14847 / LMG 12228 / 1C / PRS 101 / PAO1).